The chain runs to 224 residues: 7-cyano-7-deazaguanine synthase (224 aa).

An ATP-binding site is contributed by 14–24 (FSGGQDSTTCL). Residues Cys190, Cys198, Cys201, and Cys204 each contribute to the Zn(2+) site.

This sequence belongs to the QueC family. Requires Zn(2+) as cofactor.

It catalyses the reaction 7-carboxy-7-deazaguanine + NH4(+) + ATP = 7-cyano-7-deazaguanine + ADP + phosphate + H2O + H(+). It functions in the pathway purine metabolism; 7-cyano-7-deazaguanine biosynthesis. In terms of biological role, catalyzes the ATP-dependent conversion of 7-carboxy-7-deazaguanine (CDG) to 7-cyano-7-deazaguanine (preQ(0)). In Haemophilus ducreyi (strain 35000HP / ATCC 700724), this protein is 7-cyano-7-deazaguanine synthase.